Here is a 372-residue protein sequence, read N- to C-terminus: DNA replication and repair protein RecF (372 aa).

Residue 30–37 (GENAQGKT) coordinates ATP.

It belongs to the RecF family.

The protein localises to the cytoplasm. Functionally, the RecF protein is involved in DNA metabolism; it is required for DNA replication and normal SOS inducibility. RecF binds preferentially to single-stranded, linear DNA. It also seems to bind ATP. In Geobacillus kaustophilus (strain HTA426), this protein is DNA replication and repair protein RecF.